Here is a 246-residue protein sequence, read N- to C-terminus: Large ribosomal subunit protein uL3 (246 aa).

2 disordered regions span residues 140-162 (SHRSIGSTGGRQDPGKTFKNKKM) and 214-246 (ADVPLPGKFRENGSAGASQIEAAPEAPASEENA). An N5-methylglutamine modification is found at Q151. Positions 234–246 (EAAPEAPASEENA) are enriched in low complexity.

This sequence belongs to the universal ribosomal protein uL3 family. Part of the 50S ribosomal subunit. Forms a cluster with proteins L14 and L19. Methylated by PrmB.

In terms of biological role, one of the primary rRNA binding proteins, it binds directly near the 3'-end of the 23S rRNA, where it nucleates assembly of the 50S subunit. The polypeptide is Large ribosomal subunit protein uL3 (Methylorubrum extorquens (strain CM4 / NCIMB 13688) (Methylobacterium extorquens)).